The sequence spans 720 residues: Photosystem I P700 chlorophyll a apoprotein A1 (720 aa).

8 consecutive transmembrane segments (helical) span residues Val-61 to Ala-84, Leu-147 to His-170, Leu-186 to Leu-210, Thr-282 to Tyr-300, Trp-337 to Tyr-360, Leu-376 to Val-402, Ala-424 to His-446, and Phe-522 to Leu-540. Positions 564 and 573 each coordinate [4Fe-4S] cluster. A run of 2 helical transmembrane segments spans residues His-580–Trp-601 and Leu-655–Phe-677. His-666 serves as a coordination point for chlorophyll a'. Positions 674 and 682 each coordinate chlorophyll a. Trp-683 contributes to the phylloquinone binding site. Residues Ala-715–His-720 traverse the membrane as a helical segment.

The protein belongs to the PsaA/PsaB family. In terms of assembly, the PsaA/B heterodimer binds the P700 chlorophyll special pair and subsequent electron acceptors. PSI consists of a core antenna complex that captures photons, and an electron transfer chain that converts photonic excitation into a charge separation. The eukaryotic PSI reaction center is composed of at least 11 subunits. Requires P700 is a chlorophyll a/chlorophyll a' dimer, A0 is one or more chlorophyll a, A1 is one or both phylloquinones and FX is a shared 4Fe-4S iron-sulfur center. as cofactor.

The protein localises to the plastid. The protein resides in the chloroplast thylakoid membrane. It catalyses the reaction reduced [plastocyanin] + hnu + oxidized [2Fe-2S]-[ferredoxin] = oxidized [plastocyanin] + reduced [2Fe-2S]-[ferredoxin]. Functionally, psaA and PsaB bind P700, the primary electron donor of photosystem I (PSI), as well as the electron acceptors A0, A1 and FX. PSI is a plastocyanin-ferredoxin oxidoreductase, converting photonic excitation into a charge separation, which transfers an electron from the donor P700 chlorophyll pair to the spectroscopically characterized acceptors A0, A1, FX, FA and FB in turn. Oxidized P700 is reduced on the lumenal side of the thylakoid membrane by plastocyanin. This is Photosystem I P700 chlorophyll a apoprotein A1 from Sequoia sempervirens (California redwood).